Reading from the N-terminus, the 477-residue chain is Glutamate--tRNA ligase (477 aa).

A 'HIGH' region motif is present at residues 18–28; that stretch reads PSPTGFIHLGN. A compositionally biased stretch (basic and acidic residues) spans 128–138; the sequence is PRYDGSWRPEP. Residues 128 to 151 form a disordered region; the sequence is PRYDGSWRPEPGKTLPPVPAGMSP. A 'KMSKS' region motif is present at residues 250-254; sequence KLSKR. K253 serves as a coordination point for ATP.

The protein belongs to the class-I aminoacyl-tRNA synthetase family. Glutamate--tRNA ligase type 1 subfamily. In terms of assembly, monomer.

Its subcellular location is the cytoplasm. It catalyses the reaction tRNA(Glu) + L-glutamate + ATP = L-glutamyl-tRNA(Glu) + AMP + diphosphate. In terms of biological role, catalyzes the attachment of glutamate to tRNA(Glu) in a two-step reaction: glutamate is first activated by ATP to form Glu-AMP and then transferred to the acceptor end of tRNA(Glu). In Verminephrobacter eiseniae (strain EF01-2), this protein is Glutamate--tRNA ligase.